A 221-amino-acid polypeptide reads, in one-letter code: MNNAEILKHVDHTLLKPVATWDDIKKICDESIEYNTASICIPACYISRIHETYGDKINICTVVGFPLGYSSTEGKIAETKQALADGANEIDMVINISDVKNKAYDKVTEEIRALKEVVGNKILKVIIETCYLTEEEKIAMCKAVTEAGADYIKTSTGFGTGGATLEDIKLFKKHIGPNVKIKAAGGVSTVEDLNMFINEGCDRLGTSRAVGLLKGEETQGY.

D91 serves as the catalytic Proton donor/acceptor. The active-site Schiff-base intermediate with acetaldehyde is K153. Residue K182 is the Proton donor/acceptor of the active site.

This sequence belongs to the DeoC/FbaB aldolase family. DeoC type 1 subfamily.

The protein resides in the cytoplasm. It carries out the reaction 2-deoxy-D-ribose 5-phosphate = D-glyceraldehyde 3-phosphate + acetaldehyde. It functions in the pathway carbohydrate degradation; 2-deoxy-D-ribose 1-phosphate degradation; D-glyceraldehyde 3-phosphate and acetaldehyde from 2-deoxy-alpha-D-ribose 1-phosphate: step 2/2. Its function is as follows. Catalyzes a reversible aldol reaction between acetaldehyde and D-glyceraldehyde 3-phosphate to generate 2-deoxy-D-ribose 5-phosphate. This chain is Deoxyribose-phosphate aldolase, found in Clostridium botulinum (strain Alaska E43 / Type E3).